A 356-amino-acid chain; its full sequence is Putative ankyrin repeat protein R599 (356 aa).

ANK repeat units lie at residues 111-143 (NDDI…FCDN), 152-182 (RLEK…NVNT), 183-213 (HNYE…KLSD), 215-238 (KRKI…ELEV), 239-266 (NFDD…GANI), and 267-298 (NSIP…DINN).

The chain is Putative ankyrin repeat protein R599 from Acanthamoeba polyphaga (Amoeba).